The primary structure comprises 864 residues: Leucine--tRNA ligase (864 aa).

Positions proline 42–histidine 52 match the 'HIGH' region motif. A 'KMSKS' region motif is present at residues lysine 624–serine 628. Lysine 627 is a binding site for ATP.

It belongs to the class-I aminoacyl-tRNA synthetase family.

The protein localises to the cytoplasm. It catalyses the reaction tRNA(Leu) + L-leucine + ATP = L-leucyl-tRNA(Leu) + AMP + diphosphate. The polypeptide is Leucine--tRNA ligase (Burkholderia vietnamiensis (strain G4 / LMG 22486) (Burkholderia cepacia (strain R1808))).